A 448-amino-acid chain; its full sequence is Trigger factor (448 aa).

In terms of domain architecture, PPIase FKBP-type spans 167–253; that stretch reads GSIVRVDFVE…VKDIKRRDIP (87 aa).

Belongs to the FKBP-type PPIase family. Tig subfamily.

It localises to the cytoplasm. It carries out the reaction [protein]-peptidylproline (omega=180) = [protein]-peptidylproline (omega=0). Functionally, involved in protein export. Acts as a chaperone by maintaining the newly synthesized protein in an open conformation. Functions as a peptidyl-prolyl cis-trans isomerase. This chain is Trigger factor, found in Borrelia duttonii (strain Ly).